Reading from the N-terminus, the 543-residue chain is Carboxypeptidase Y homolog A (543 aa).

The N-terminal stretch at 1–17 (MRVAASALLAGAASAAV) is a signal peptide. Residues 18–128 (APQQQILKFP…KLEQFDLRVK (111 aa)) constitute a propeptide that is removed on maturation. 5 disulfides stabilise this stretch: C182/C421, C316/C330, C340/C363, C347/C356, and C385/C391. The N-linked (GlcNAc...) asparagine glycan is linked to N213. S269 is a catalytic residue. The active site involves D460. N508 is a glycosylation site (N-linked (GlcNAc...) asparagine). H519 is a catalytic residue.

It belongs to the peptidase S10 family.

Its subcellular location is the vacuole. It catalyses the reaction Release of a C-terminal amino acid with broad specificity.. Its function is as follows. Vacuolar carboxypeptidase involved in degradation of small peptides. Digests preferentially peptides containing an aliphatic or hydrophobic residue in P1' position, as well as methionine, leucine or phenylalanine in P1 position of ester substrate. This is Carboxypeptidase Y homolog A (CPYA) from Phaeosphaeria nodorum (strain SN15 / ATCC MYA-4574 / FGSC 10173) (Glume blotch fungus).